The following is a 54-amino-acid chain: Ovomucoid (54 aa).

Residues 4-54 (VDCSDYPKPVCTLEDMPLCGSDNITYHNKCYFCNAVAHSNGTLTFSHFGKC) form the Kazal-like domain. 3 disulfide bridges follow: cysteine 6-cysteine 36, cysteine 14-cysteine 33, and cysteine 22-cysteine 54. The N-linked (GlcNAc...) asparagine glycan is linked to asparagine 43.

The protein resides in the secreted. The sequence is that of Ovomucoid from Carpococcyx renauldi (Coral-billed ground-cuckoo).